The chain runs to 253 residues: 5-oxoprolinase subunit A (253 aa).

This sequence belongs to the LamB/PxpA family. Forms a complex composed of PxpA, PxpB and PxpC.

It catalyses the reaction 5-oxo-L-proline + ATP + 2 H2O = L-glutamate + ADP + phosphate + H(+). Functionally, catalyzes the cleavage of 5-oxoproline to form L-glutamate coupled to the hydrolysis of ATP to ADP and inorganic phosphate. In Chloroflexus aurantiacus (strain ATCC 29364 / DSM 637 / Y-400-fl), this protein is 5-oxoprolinase subunit A.